Here is a 378-residue protein sequence, read N- to C-terminus: Putative UDP-N-acetylglucosamine 2-epimerase (378 aa).

This sequence belongs to the UDP-N-acetylglucosamine 2-epimerase family.

The protein localises to the cytoplasm. It catalyses the reaction UDP-N-acetyl-alpha-D-glucosamine = UDP-N-acetyl-alpha-D-mannosamine. This Thermotoga maritima (strain ATCC 43589 / DSM 3109 / JCM 10099 / NBRC 100826 / MSB8) protein is Putative UDP-N-acetylglucosamine 2-epimerase.